The primary structure comprises 236 residues: GTP cyclohydrolase 1 (236 aa).

Positions 1-52 (MAAARSCNGYARREGPPSPKLGTEKPRVSAGSGGSGDGWRGERPRSEEDNEL) are disordered. Zn(2+) contacts are provided by Cys127, His130, and Cys198.

This sequence belongs to the GTP cyclohydrolase I family. Toroid-shaped homodecamer, composed of two pentamers of five dimers.

The protein localises to the cytoplasm. It localises to the nucleus. It carries out the reaction GTP + H2O = 7,8-dihydroneopterin 3'-triphosphate + formate + H(+). It functions in the pathway cofactor biosynthesis; 7,8-dihydroneopterin triphosphate biosynthesis; 7,8-dihydroneopterin triphosphate from GTP: step 1/1. GTP shows a positive allosteric effect, and tetrahydrobiopterin inhibits the enzyme activity. Zinc is required for catalytic activity. Inhibited by Mg(2+). Functionally, may positively regulate nitric oxide synthesis in endothelial cells. May be involved in dopamine synthesis. May modify pain sensitivity and persistence. The sequence is that of GTP cyclohydrolase 1 (GCH1) from Gallus gallus (Chicken).